The primary structure comprises 212 residues: Adenylate kinase (212 aa).

10–15 is a binding site for ATP; it reads GAGKGT. The segment at 30-59 is NMP; that stretch reads AIGDIFRTIIKTSTSEAELINNYVKQGELI. Residues Arg36, 57 to 59, 85 to 88, and Gln92 contribute to the AMP site; these read ELI and GYPR. The segment at 122–160 is LID; sequence GRYSCKNCGKIYNRYFLQPKTDNVCDVCGSSTFDYRKDD. Arg123 is a binding site for ATP. Positions 126 and 129 each coordinate Zn(2+). 132 to 133 is a binding site for ATP; it reads IY. 2 residues coordinate Zn(2+): Cys146 and Cys149. Residues Arg157 and Arg168 each coordinate AMP. Residue Lys196 participates in ATP binding.

This sequence belongs to the adenylate kinase family. As to quaternary structure, monomer.

Its subcellular location is the cytoplasm. The catalysed reaction is AMP + ATP = 2 ADP. Its pathway is purine metabolism; AMP biosynthesis via salvage pathway; AMP from ADP: step 1/1. Its function is as follows. Catalyzes the reversible transfer of the terminal phosphate group between ATP and AMP. Plays an important role in cellular energy homeostasis and in adenine nucleotide metabolism. This is Adenylate kinase from Rickettsia africae (strain ESF-5).